The sequence spans 1103 residues: Trophozoite exported protein 1 (1103 aa).

A coiled-coil region spans residues Lys-173–Phe-212. Disordered stretches follow at residues Glu-178–Glu-210 and Lys-271–Lys-301. Acidic residues predominate over residues Gln-184–Glu-210. Over residues Lys-271–Asn-280 the composition is skewed to basic and acidic residues. 2 coiled-coil regions span residues Asp-304–Asn-330 and Tyr-478–Asn-518. The disordered stretch occupies residues Tyr-544–Arg-601. Positions Asp-568–Asn-585 are enriched in low complexity. 3 coiled-coil regions span residues Phe-650–Ile-791, Asp-819–Lys-932, and Asn-993–Lys-1030. The RING-type zinc finger occupies Cys-1050–Lys-1089.

It is found in the host cell membrane. The sequence is that of Trophozoite exported protein 1 from Plasmodium falciparum (isolate 3D7).